The primary structure comprises 833 residues: Leucine--tRNA ligase (833 aa).

The 'HIGH' region motif lies at 41-52 (PYPSGAGLHVGH). The 'KMSKS' region signature appears at 610–614 (KMSKS). An ATP-binding site is contributed by Lys-613.

It belongs to the class-I aminoacyl-tRNA synthetase family.

It is found in the cytoplasm. The enzyme catalyses tRNA(Leu) + L-leucine + ATP = L-leucyl-tRNA(Leu) + AMP + diphosphate. This chain is Leucine--tRNA ligase, found in Streptococcus uberis (strain ATCC BAA-854 / 0140J).